The sequence spans 477 residues: Spliceosome-associated protein CWC27 homolog (477 aa).

The PPIase cyclophilin-type domain maps to 11-166; the sequence is SNGKVLLKTT…NPHKIKCTEV (156 aa). Disordered stretches follow at residues 203 to 355 and 401 to 477; these read LLSF…AENT and TQAI…KERR. The span at 208 to 218 shows a compositional bias: acidic residues; the sequence is EEAEEDEEEVN. 2 stretches are compositionally biased toward basic and acidic residues: residues 230–240 and 247–258; these read SSHDLLKDDPR and VEREKDSQSADS. Acidic residues predominate over residues 259–279; it reads DKDEDEMSDDDDEEEDDEMDS. Composition is skewed to basic and acidic residues over residues 280–299, 311–353, and 430–442; these read DEKH…DPSK, EERK…KEAE, and QFEE…KDAN. Residues 308 to 381 are a coiled coil; that stretch reads DEAEERKSSR…EEVRKKNTNK (74 aa).

This sequence belongs to the cyclophilin-type PPIase family. As to quaternary structure, part of the activated spliceosome B/catalytic step 1 spliceosome, one of the forms of the spliceosome which has a well-formed active site but still cannot catalyze the branching reaction and is composed at least of 52 proteins, the U2, U5 and U6 snRNAs and the pre-mRNA. Recruited during early steps of activated spliceosome B maturation, it is probably one of the first proteins released from this complex as he matures to the spliceosome C complex. Component of the minor spliceosome, which splices U12-type introns.

It localises to the nucleus. In terms of biological role, as part of the spliceosome, plays a role in pre-mRNA splicing. Probable inactive PPIase with no peptidyl-prolyl cis-trans isomerase activity. This is Spliceosome-associated protein CWC27 homolog (cwc27) from Xenopus laevis (African clawed frog).